The sequence spans 229 residues: uncharacterized protein (229 aa).

An N-terminal signal peptide occupies residues 1–26 (MSRNDARYLRCTAALGAAFFACGAAA).

It belongs to the OmpW/AlkL family.

It localises to the cell outer membrane. This is an uncharacterized protein from Sinorhizobium fredii (strain NBRC 101917 / NGR234).